Here is a 615-residue protein sequence, read N- to C-terminus: DNA mismatch repair protein MutL (615 aa).

Residues 362-397 (HFAEPAVREPVAPRYTPAPASGSRPAAPWPNAQPGY) form a disordered region. Over residues 378–391 (PAPASGSRPAAPWP) the composition is skewed to low complexity.

It belongs to the DNA mismatch repair MutL/HexB family.

In terms of biological role, this protein is involved in the repair of mismatches in DNA. It is required for dam-dependent methyl-directed DNA mismatch repair. May act as a 'molecular matchmaker', a protein that promotes the formation of a stable complex between two or more DNA-binding proteins in an ATP-dependent manner without itself being part of a final effector complex. The sequence is that of DNA mismatch repair protein MutL from Escherichia coli O17:K52:H18 (strain UMN026 / ExPEC).